Consider the following 779-residue polypeptide: Phosphoribosylformylglycinamidine synthase subunit PurL (779 aa).

The active site involves H52. ATP is bound by residues Y55 and K94. Mg(2+) is bound at residue E96. Residues 97-100 (SHNH) and R119 contribute to the substrate site. The active-site Proton acceptor is the H98. D120 is a Mg(2+) binding site. Substrate is bound at residue Q243. D271 serves as a coordination point for Mg(2+). 315 to 317 (ESQ) lines the substrate pocket. 2 residues coordinate ATP: N523 and G560. N561 contacts Mg(2+). S563 lines the substrate pocket.

Belongs to the FGAMS family. Monomer. Part of the FGAM synthase complex composed of 1 PurL, 1 PurQ and 2 PurS subunits.

The protein resides in the cytoplasm. It carries out the reaction N(2)-formyl-N(1)-(5-phospho-beta-D-ribosyl)glycinamide + L-glutamine + ATP + H2O = 2-formamido-N(1)-(5-O-phospho-beta-D-ribosyl)acetamidine + L-glutamate + ADP + phosphate + H(+). The protein operates within purine metabolism; IMP biosynthesis via de novo pathway; 5-amino-1-(5-phospho-D-ribosyl)imidazole from N(2)-formyl-N(1)-(5-phospho-D-ribosyl)glycinamide: step 1/2. Part of the phosphoribosylformylglycinamidine synthase complex involved in the purines biosynthetic pathway. Catalyzes the ATP-dependent conversion of formylglycinamide ribonucleotide (FGAR) and glutamine to yield formylglycinamidine ribonucleotide (FGAM) and glutamate. The FGAM synthase complex is composed of three subunits. PurQ produces an ammonia molecule by converting glutamine to glutamate. PurL transfers the ammonia molecule to FGAR to form FGAM in an ATP-dependent manner. PurS interacts with PurQ and PurL and is thought to assist in the transfer of the ammonia molecule from PurQ to PurL. The protein is Phosphoribosylformylglycinamidine synthase subunit PurL of Prochlorococcus marinus (strain MIT 9515).